The sequence spans 609 residues: Replication factor A protein 1 (609 aa).

The segment covering 130-152 (QNEQNNASAPRTGISTSTNSFYG) has biased composition (polar residues). The disordered stretch occupies residues 130–166 (QNEQNNASAPRTGISTSTNSFYGNNAAATAPAPPPMM). Residues 192–278 (WTIRARVTNK…NEYELMFERD (87 aa)) constitute a DNA-binding region (OB). Residues 477 to 498 (CPAADCNKKVFDQGGSWRCEKC) form a C4-type zinc finger.

This sequence belongs to the replication factor A protein 1 family. In terms of assembly, component of the heterotrimeric canonical replication protein A complex (RPA).

The protein localises to the nucleus. In terms of biological role, as part of the replication protein A (RPA/RP-A), a single-stranded DNA-binding heterotrimeric complex, may play an essential role in DNA replication, recombination and repair. Binds and stabilizes single-stranded DNA intermediates, preventing complementary DNA reannealing and recruiting different proteins involved in DNA metabolism. The sequence is that of Replication factor A protein 1 (ssb1) from Schizosaccharomyces pombe (strain 972 / ATCC 24843) (Fission yeast).